The following is a 508-amino-acid chain: MAQVINTNSLSLLTQNNLNKSQSSLSSAIERLSSGLRINSAKDDAAGQAIANRFTSNIKGLTQASRNANDGISIAQTTEGALNEINNNLQRVRELSVQATNGTNSDSDLKSIQDEIQQRLEEIDRVSNQTQFNGVKVLSQDNQMKIQVGANDGETITIDLQKIDVKSLGLDGFNVNGPKEATVGDLKSSFKNVTGYDTYAVGANKYRVDVNSGAVVTDTTAPTVPDKVYVNAANGQLTTADAQNNTAVDLFKSTKSAAGTDDAKAIATSIKGGKVGDTFDYKGVSFTIDTKAGDDGNGTVSTTINGEKVTLTISDIGASATDVNSAKIQSSKDVYTSVVSGQFTFADKTKNESAKLSDLEANNAVKGESKITVNGAEYTANAAGDKVTLAGKTMFIDKTASGVSTLINEDAAAAKKSTANPLASIDSALSKVDAVRSSLGAIQNRFDSAITNLGNTVTNLNSARSRIEDADYATEVSNMSKAQILQQAGTSVLAQANQVPQNVLSLLR.

The protein belongs to the bacterial flagellin family.

The protein resides in the secreted. The protein localises to the bacterial flagellum. In terms of biological role, flagellin is the subunit protein which polymerizes to form the filaments of bacterial flagella. This chain is Flagellin (fliC), found in Salmonella oranienberg.